The primary structure comprises 498 residues: UDP-N-acetylmuramate--L-alanine ligase (498 aa).

120-126 (GSHGKTT) contacts ATP.

The protein belongs to the MurCDEF family.

It localises to the cytoplasm. It carries out the reaction UDP-N-acetyl-alpha-D-muramate + L-alanine + ATP = UDP-N-acetyl-alpha-D-muramoyl-L-alanine + ADP + phosphate + H(+). It participates in cell wall biogenesis; peptidoglycan biosynthesis. Functionally, cell wall formation. The sequence is that of UDP-N-acetylmuramate--L-alanine ligase from Rickettsia typhi (strain ATCC VR-144 / Wilmington).